We begin with the raw amino-acid sequence, 641 residues long: MELKGVQPSNGSSNGSGNGATNAASTEKTDAEKPTAERTNWGNGLEFLMSCISVSVGLGNVWRFPFTAYENGGGAFLIPYIIVLFLIGKPMYYLEMIMGQFTSQGTVKIWSVVPGFVGVGYGQAFGTICIISYYSSLLALTLYYLFVSFQSELPWSYCRDEWTNCVNSRPQEYVDNLLTGVSLANESARNLSGIVANDETEKLQSSSELYFLNVVIKEKLDISDGVGDPDWKLTLALFVAWVVIFLVIMRGVKSSGKAAYFLALFPYVVLFVLLIRAVTLEGARDGILFFLEPQWGELLNPTVWKEAVVQCFFSLAVGSGPIIMFASYNRFDHGIYRDAMIVTTLDTLTSLLGGITIFAILGNLAHNLQIENIRDVVRSGTGLAFISYPDAISKFQAVPQLFSVLFFFMLFVLGIGSIVALQSTIVTIICDQFKGWKYWKVALTTSVCGFLMGLVYVTPGGQWILTLVDFYGGTYVVFILAIFELAGIVWVYGLQNFCDDIEFMCNRRVSLYWRVCWSFFTPVMMIIIFIYSMVTIEPIKYSELYFPEAANIAGWLLFAIGAAQFPLWGLWYISRHPQGTYWKSLKASLKPSDRWGPANPEIRREWVIFKNQKAAQRATQKDTSKLGFFWRKVANFCGSNK.

Positions 1-38 (MELKGVQPSNGSSNGSGNGATNAASTEKTDAEKPTAER) are disordered. The Cytoplasmic portion of the chain corresponds to 1–40 (MELKGVQPSNGSSNGSGNGATNAASTEKTDAEKPTAERTN). Positions 9 to 26 (SNGSSNGSGNGATNAAST) are enriched in low complexity. Residues 27-36 (EKTDAEKPTA) are compositionally biased toward basic and acidic residues. The next 3 membrane-spanning stretches (helical) occupy residues 41 to 61 (WGNG…LGNV), 74 to 94 (GAFL…MYYL), and 111 to 131 (SVVP…ICII). 2 N-linked (GlcNAc...) asparagine glycosylation sites follow: Asn185 and Asn190. 9 consecutive transmembrane segments (helical) span residues 229 to 249 (PDWK…LVIM), 258 to 278 (AAYF…IRAV), 307 to 327 (AVVQ…MFAS), 341 to 361 (IVTT…FAIL), 401 to 421 (LFSV…IVAL), 447 to 467 (VCGF…ILTL), 474 to 494 (TYVV…VYGL), 516 to 536 (CWSF…MVTI), and 552 to 572 (IAGW…GLWY).

This sequence belongs to the sodium:neurotransmitter symporter (SNF) (TC 2.A.22) family. In terms of tissue distribution, in larvae, weak specific expression in the anterior midgut just proximal to the gastric caeca reproductive rudiments, common ureters of the Malpighian tubules, and distal swollen portion of the anterior pair of Malpighian tubules. Expression is also seen in the imaginal disks of the head; brain hemispheres and the ventral ganglion. Stronger expression in the posterior midgut.

It localises to the membrane. In terms of biological role, unusual broad substrate spectrum amino acid:sodium cotransporter that promotes absorption of the D isomers of essential amino acids. Neutral amino acids are the preferred substrates, especially methionine and phenylalanine. The sequence is that of Sodium-dependent nutrient amino acid transporter 1 (NAAT1) from Drosophila melanogaster (Fruit fly).